The following is an 884-amino-acid chain: Alanine--tRNA ligase (884 aa).

Zn(2+)-binding residues include His-570, His-574, Cys-676, and His-680.

Belongs to the class-II aminoacyl-tRNA synthetase family. Requires Zn(2+) as cofactor.

It localises to the cytoplasm. The catalysed reaction is tRNA(Ala) + L-alanine + ATP = L-alanyl-tRNA(Ala) + AMP + diphosphate. Functionally, catalyzes the attachment of alanine to tRNA(Ala) in a two-step reaction: alanine is first activated by ATP to form Ala-AMP and then transferred to the acceptor end of tRNA(Ala). Also edits incorrectly charged Ser-tRNA(Ala) and Gly-tRNA(Ala) via its editing domain. The protein is Alanine--tRNA ligase of Lawsonia intracellularis (strain PHE/MN1-00).